A 453-amino-acid polypeptide reads, in one-letter code: Ribosomal protein uS12 methylthiotransferase RimO (453 aa).

Positions 9–124 constitute an MTTase N-terminal domain; that stretch reads PKVGFVSLGC…VMEAVHTHLP (116 aa). [4Fe-4S] cluster-binding residues include cysteine 18, cysteine 54, cysteine 83, cysteine 155, cysteine 159, and cysteine 162. The Radical SAM core domain occupies 141–382; that stretch reads LTPKHYAYLK…MEVAERVSAR (242 aa). The region spanning 385-453 is the TRAM domain; it reads QRKVGKSLRV…ADGHDLWGEV (69 aa).

This sequence belongs to the methylthiotransferase family. RimO subfamily. It depends on [4Fe-4S] cluster as a cofactor.

Its subcellular location is the cytoplasm. It carries out the reaction L-aspartate(89)-[ribosomal protein uS12]-hydrogen + (sulfur carrier)-SH + AH2 + 2 S-adenosyl-L-methionine = 3-methylsulfanyl-L-aspartate(89)-[ribosomal protein uS12]-hydrogen + (sulfur carrier)-H + 5'-deoxyadenosine + L-methionine + A + S-adenosyl-L-homocysteine + 2 H(+). Functionally, catalyzes the methylthiolation of an aspartic acid residue of ribosomal protein uS12. In Ralstonia pickettii (strain 12J), this protein is Ribosomal protein uS12 methylthiotransferase RimO.